A 548-amino-acid chain; its full sequence is NAD(P)H-quinone oxidoreductase chain 4 (548 aa).

Helical transmembrane passes span 17–37, 48–68, 103–123, 127–147, 149–169, 181–201, 222–242, 256–276, 290–310, 327–347, 348–368, 389–409, 430–450, and 477–497; these read VPWL…IPFI, WYAL…YLTG, LILL…PVTF, LFFF…AVQD, LLFF…LAIW, FILY…AMGF, GFQL…LPIV, TAPV…YALL, FAPL…LTSF, MGFV…GAML, QMIS…ATYD, FALW…SGFV, VVIC…LLSM, and VYII…PRLM.

It belongs to the complex I subunit 4 family.

Its subcellular location is the cellular thylakoid membrane. It catalyses the reaction a plastoquinone + NADH + (n+1) H(+)(in) = a plastoquinol + NAD(+) + n H(+)(out). It carries out the reaction a plastoquinone + NADPH + (n+1) H(+)(in) = a plastoquinol + NADP(+) + n H(+)(out). In terms of biological role, NDH-1 shuttles electrons from NAD(P)H, via FMN and iron-sulfur (Fe-S) centers, to quinones in the respiratory chain. The immediate electron acceptor for the enzyme in this species is believed to be plastoquinone. Couples the redox reaction to proton translocation (for every two electrons transferred, four hydrogen ions are translocated across the cytoplasmic membrane), and thus conserves the redox energy in a proton gradient. The polypeptide is NAD(P)H-quinone oxidoreductase chain 4 (Synechococcus sp. (strain CC9902)).